The sequence spans 389 residues: Homoserine O-acetyltransferase (389 aa).

An AB hydrolase-1 domain is found at Asn-63–Leu-371. Ser-168 acts as the Nucleophile in catalysis. Arg-240 contacts substrate. Catalysis depends on residues Asp-334 and His-367. Asp-368 serves as a coordination point for substrate.

It belongs to the AB hydrolase superfamily. MetX family. As to quaternary structure, homodimer.

The protein resides in the cytoplasm. The catalysed reaction is L-homoserine + acetyl-CoA = O-acetyl-L-homoserine + CoA. It participates in amino-acid biosynthesis; L-methionine biosynthesis via de novo pathway; O-acetyl-L-homoserine from L-homoserine: step 1/1. Its function is as follows. Transfers an acetyl group from acetyl-CoA to L-homoserine, forming acetyl-L-homoserine. This chain is Homoserine O-acetyltransferase, found in Clavibacter michiganensis subsp. michiganensis (strain NCPPB 382).